The following is a 470-amino-acid chain: Sulfate adenylyltransferase subunit 1 (470 aa).

Residues 22 to 236 form the tr-type G domain; it reads KELLRFITCG…YLETIKIDYA (215 aa). The tract at residues 31–38 is G1; the sequence is GSVDDGKS. 31–38 contacts GTP; it reads GSVDDGKS. The segment at 89-93 is G2; the sequence is GITID. A G3 region spans residues 110-113; sequence DTPG. GTP is bound by residues 110–114 and 165–168; these read DTPGH and NKMD. Positions 165–168 are G4; sequence NKMD. Residues 202 to 204 are G5; that stretch reads SAL.

The protein belongs to the TRAFAC class translation factor GTPase superfamily. Classic translation factor GTPase family. CysN/NodQ subfamily. Heterodimer composed of CysD, the smaller subunit, and CysN.

The catalysed reaction is sulfate + ATP + H(+) = adenosine 5'-phosphosulfate + diphosphate. It participates in sulfur metabolism; hydrogen sulfide biosynthesis; sulfite from sulfate: step 1/3. Functionally, with CysD forms the ATP sulfurylase (ATPS) that catalyzes the adenylation of sulfate producing adenosine 5'-phosphosulfate (APS) and diphosphate, the first enzymatic step in sulfur assimilation pathway. APS synthesis involves the formation of a high-energy phosphoric-sulfuric acid anhydride bond driven by GTP hydrolysis by CysN coupled to ATP hydrolysis by CysD. In Francisella tularensis subsp. novicida (strain U112), this protein is Sulfate adenylyltransferase subunit 1.